The sequence spans 224 residues: UPF0758 protein lwe1562 (224 aa).

The MPN domain maps to 102–224 (VIRCPDDAVK…YISLKEKGYF (123 aa)). 3 residues coordinate Zn(2+): H173, H175, and D186. Residues 173–186 (HNHPSGDPTPSSED) carry the JAMM motif motif.

It belongs to the UPF0758 family.

This Listeria welshimeri serovar 6b (strain ATCC 35897 / DSM 20650 / CCUG 15529 / CIP 8149 / NCTC 11857 / SLCC 5334 / V8) protein is UPF0758 protein lwe1562.